The sequence spans 273 residues: Bifunctional protein FolD (273 aa).

Residues 155–157 (GRS), S182, and I223 each bind NADP(+).

This sequence belongs to the tetrahydrofolate dehydrogenase/cyclohydrolase family. In terms of assembly, homodimer.

It catalyses the reaction (6R)-5,10-methylene-5,6,7,8-tetrahydrofolate + NADP(+) = (6R)-5,10-methenyltetrahydrofolate + NADPH. The catalysed reaction is (6R)-5,10-methenyltetrahydrofolate + H2O = (6R)-10-formyltetrahydrofolate + H(+). It functions in the pathway one-carbon metabolism; tetrahydrofolate interconversion. In terms of biological role, catalyzes the oxidation of 5,10-methylenetetrahydrofolate to 5,10-methenyltetrahydrofolate and then the hydrolysis of 5,10-methenyltetrahydrofolate to 10-formyltetrahydrofolate. This Pseudothermotoga lettingae (strain ATCC BAA-301 / DSM 14385 / NBRC 107922 / TMO) (Thermotoga lettingae) protein is Bifunctional protein FolD.